The sequence spans 598 residues: Arginine--tRNA ligase (598 aa).

A 'HIGH' region motif is present at residues 131–141; the sequence is ANPTGPMHVGH. The segment at 288–309 is disordered; that stretch reads KLPPPKSKKGQPPPQAQPDEEG.

Belongs to the class-I aminoacyl-tRNA synthetase family. As to quaternary structure, monomer.

Its subcellular location is the cytoplasm. The enzyme catalyses tRNA(Arg) + L-arginine + ATP = L-arginyl-tRNA(Arg) + AMP + diphosphate. The chain is Arginine--tRNA ligase from Anaeromyxobacter dehalogenans (strain 2CP-C).